Here is an 83-residue protein sequence, read N- to C-terminus: Kunitz-type serine protease inhibitor textilinin-1 (83 aa).

Positions 1-24 (MSSGGLLLLLGLLTLWEVLTPVSS) are cleaved as a signal peptide. The region spanning 31-81 (CELPADTGPCRVRFPSFYYNPDEKKCLEFIYGGCEGNANNFITKEECESTC) is the BPTI/Kunitz inhibitor domain. 3 disulfides stabilise this stretch: Cys-31-Cys-81, Cys-40-Cys-64, and Cys-56-Cys-77.

This sequence belongs to the venom Kunitz-type family. In terms of tissue distribution, expressed by the venom gland.

Its subcellular location is the secreted. Its function is as follows. Strongly inhibits plasmin (Ki=0.44 nM) and trypsin (Ki=0.42 nM). Has little effect on plasma (Ki=1870 nM) and tissue (Ki=12900 nM) kallikreins. Its plasmin-inhibiting activity makes it an antifibrinolytic agent. In vivo, reduces blood loss in a mouse tail vein bleeding model. The polypeptide is Kunitz-type serine protease inhibitor textilinin-1 (Pseudonaja textilis textilis (Eastern brown snake)).